Consider the following 1161-residue polypeptide: MVNISIVAGIVALATSAAAITATTTLSPYDERVNLIELAVYVSDIRAHIFQYYSFRNHHKTETYPSEIAAAVFDYGDFTTRLTGISGDEVTRMITGVPWYSTRLKPAISSALSKDGIYTAIPTSTSTTTTKSSTSTTPTTTITSTTSTTSTTPTTSTTSTTPTTSTTSTTPTTSTTSTTPTTSTTSTTPTTSTTSTTPTTSTTSTTPTTSTTSTTPTTSTTSTTPTTSTTPTTSTTSTTSQTSTKSTTPTTSSTSTTPTTSTTPTTSTTSTAPTTSTTSTTSTTSTISTAPTTSTTSSTFSTSSASASSVISTTATTSTTFASLTTPATSTASTDHTTSSVSTTNAFTTSATTTTTSDTYISSSSPSQVTSSAEPTTVSEVTSSVEPTRSSQVTSSAEPTTVSEFTSSVEPTRSSQVTSSAEPTTVSEFTSSVEPTRSSQVTSSAEPTTVSEFTSSVEPTRSSQVTSSAEPTTVSEFTSSVEPTRSSQVTSSAEPTTVSEFTSSVEPIRSSQVTSSAEPTTVSEVTSSVEPIRSSQVTTTEPVSSFGSTFSEITSSAEPLSFSKATTSAESISSNQITISSELIVSSVITSSSEIPSSIEVLTSSGISSSVEPTSLVGPSSDESISSTESLSATSTFTSAVVSSSKAADFFTRSTVSAKSDVSGNSSTQSTTFFATPSTPLAVSSTVVTSSTDSVSPNIPFSEISSSPESSTAITSTSTSFIAERTSSLYLSSSNMSSFTLSTFTVSQSIVSSFSMEPTSSVASFASSSPLLVSSRSNCSDARSSNTISSGLFSTIENVRNATSTFTNLSTDEIVITSCKSSCTNEDSVLTKTQVSTVETTITSCSGGICTTLMSPVTTINAKANTLTTTETSTVETTITTCPGGVCSTLTVPVTTITSEATTTATISCEDNEEDITSTETELLTLETTITSCSGGICTTLMSPVTTINAKANTLTTTETSTVETTITTCSGGVCSTLTVPVTTITSEATTTATISCEDNEEDVASTKTELLTMETTITSCSGGICTTLMSPVSSFNSKATTSNNAESTIPKAIKVSCSAGACTTLTTVDAGISMFTRTGLSITQTTVTNCSGGTCTMLTAPIATATSKVISPIPKASSATSIAHSSASYTVSINTNGAYNFDKDNIFGTAIVAVVALLLL.

An N-terminal signal peptide occupies residues 1-19; that stretch reads MVNISIVAGIVALATSAAA. 4 disordered regions span residues 123–309, 326–345, 354–547, and 691–713; these read TSTS…SASS, TPAT…STTN, TTTS…SSFG, and STDS…SSTA. The interval 134-286 is 46 X 3 AA tandem repeats of T-[SP]-T; sequence TSTTPTTTIT…TTSTTSTTST (153 aa). Residues 354 to 372 show a composition bias toward low complexity; sequence TTTSDTYISSSSPSQVTSS. Repeat copies occupy residues 373-384, 385-396, 397-408, 409-420, 421-432, 433-444, 445-456, 457-468, 469-480, 481-492, 493-504, 505-516, 517-528, and 529-540. The tract at residues 373–540 is 14 X 12 AA approximate tandem repeats; it reads AEPTTVSEVT…PIRSSQVTTT (168 aa). Polar residues predominate over residues 373 to 547; the sequence is AEPTTVSEVT…TTTEPVSSFG (175 aa). Repeat copies occupy residues 826–913 and 914–1001. The segment at 826 to 1040 is 2.5 X 88 AA approximate tandem repeats; it reads EDSVLTKTQV…SPVSSFNSKA (215 aa). A 2-3; truncated repeat occupies 1002–1040; sequence EDVASTKTELLTMETTITSCSGGICTTLMSPVSSFNSKA. Residue Asn-1137 is the site of GPI-anchor amidated asparagine attachment. A propeptide spans 1138–1161 (removed in mature form); it reads GAYNFDKDNIFGTAIVAVVALLLL.

Belongs to the SRP1/TIP1 family. Post-translationally, extensively O-glycosylated. The GPI-anchor is attached to the protein in the endoplasmic reticulum and serves to target the protein to the cell surface. There, the glucosamine-inositol phospholipid moiety is cleaved off and the GPI-modified mannoprotein is covalently attached via its lipidless GPI glycan remnant to the 1,6-beta-glucan of the outer cell wall layer.

Its subcellular location is the secreted. It is found in the cell wall. It localises to the cell membrane. In terms of biological role, component of the cell wall. The sequence is that of Cell wall protein DAN4 from Saccharomyces cerevisiae (strain ATCC 204508 / S288c) (Baker's yeast).